A 460-amino-acid polypeptide reads, in one-letter code: Baeyer-Villiger oxidase AgnL3 (460 aa).

This sequence belongs to the questin oxidase family. The cofactor is NADPH.

It participates in secondary metabolite biosynthesis. Functionally, baeyer-Villiger oxidase; part of the gene cluster that mediates the biosynthesis of agnestins, dihydroxy-xanthone metabolites. The pathway begins with the assembly and cyclization of atrochrysone thioester by the non-reducing polyketide synthase Agnpks1. The atrochrysone carboxyl ACP thioesterase AgnL7 then breaks the thioester bond and releases the atrochrysone carboxylic acid as the first enzyme-free intermediate. The decarboxylase AgnL1 then catalyzes the concerted decarboxylation-elimination required to convert atochrysone carboxylic acid into emodin anthrone, which is further oxidized to emodin by the anthrone oxygenase AgnL2. Emodin then undergoes reduction catalyzed by the oxidoreductase AgnL4 to yield the dihydroquinone tautomer which is the substrate for reduction by the short chain dehydrogenase AgnL6 reduction to produce hydroxyketone, followed by AgnL8 dehydration and likely spontaneous autoxidation to chrysophanol. Baeyer-Villiger oxidation by the oxidase AgnL3 leads to monodictyphenone via cleavage of the C-10/C-10a bond of chrysophanol. Alternative cleavage at the C-4a/C-10 bond of chrysophanol also leads to the formation some cephalone F. Further conversion to agnestins A and B, requires reduction to dihydro-monodictyphenone, oxidation to agnestin C probably via an epoxide, and rearrangement to either agnestin A or agnestin B directly, although agnestin A or agnestin B can also interconvert. Within the cluster, AgnR1 is the only unassigned oxidoreductase present which could be involved in this conversion. However, AgnR1 seems not to be involved in this step, and thus genes involved in the proposed oxidation/reduction may be located elsewhere on the genome. Further agnestin A derivatives are probably formed by spontaneous decarboxylations, dehydrations and methanolysis reactions. In Paecilomyces divaricatus (Penicillium divaricatum), this protein is Baeyer-Villiger oxidase AgnL3.